Consider the following 560-residue polypeptide: Trans-activating transcriptional regulatory protein (560 aa).

The tract at residues 106–133 (DSMKRKASELDSDSDSGESSKGKKRVIK) is disordered.

The protein belongs to the nucleopolyhedrovirus IE-1 protein family.

Regulatory transcriptional protein, which trans-activates gene expression from early baculovirus promoters. Can also trans-activate its own promoter, suggesting that it is autoregulated during normal infection of insect cells. The sequence is that of Trans-activating transcriptional regulatory protein (IE1) from Choristoneura fumiferana nuclear polyhedrosis virus (CfMNPV).